The sequence spans 137 residues: MPTIQQLVRKGREVLVEKSKSPALDSCPQRRGVCVRVYTTTPKKPNSAMRKVARVRLTNSKEVNSYIPGEGHNLQEHSIVLVRGGRVKDLPGVRYHIVRGTLDTAGVAGRTQRRSKYGAKRPKAGQAAAPAKGKGKK.

Asp-89 is modified (3-methylthioaspartic acid). The interval 105–137 is disordered; the sequence is AGVAGRTQRRSKYGAKRPKAGQAAAPAKGKGKK. Basic residues predominate over residues 111–123; it reads TQRRSKYGAKRPK. The segment covering 124–137 has biased composition (low complexity); it reads AGQAAAPAKGKGKK.

The protein belongs to the universal ribosomal protein uS12 family. As to quaternary structure, part of the 30S ribosomal subunit. Contacts proteins S8 and S17. May interact with IF1 in the 30S initiation complex.

With S4 and S5 plays an important role in translational accuracy. Functionally, interacts with and stabilizes bases of the 16S rRNA that are involved in tRNA selection in the A site and with the mRNA backbone. Located at the interface of the 30S and 50S subunits, it traverses the body of the 30S subunit contacting proteins on the other side and probably holding the rRNA structure together. The combined cluster of proteins S8, S12 and S17 appears to hold together the shoulder and platform of the 30S subunit. This is Small ribosomal subunit protein uS12 from Phocaeicola vulgatus (strain ATCC 8482 / DSM 1447 / JCM 5826 / CCUG 4940 / NBRC 14291 / NCTC 11154) (Bacteroides vulgatus).